A 350-amino-acid chain; its full sequence is MLRECDYSQALLEQVNQAISDKTPLVIQGSNSKAFLGRPVTGQTLDVRCHRGIVNYDPTELVITARVGTPLVTIEAALESAGQMLPCEPPHYGEEATWGGMVACGLAGPRRPWSGSVRDFVLGTRIITGAGKHLRFGGEVMKNVAGYDLSRLMVGSYGCLGVLTEISMKVLPRPRASLSLRREISLQEAMSEIAEWQLQPLPISGLCYFDNALWIRLEGGEGSVKAARELLGGEEVAGQFWQQLREQQLPFFSLPGTLWRISLPSDAPMMDLPGEQLIDWGGALRWLKSTAEDNQIHRIARNAGGHATRFSAGDGGFAPLSAPLFRYHQQLKQQLDPCGVFNPGRMYAEL.

Positions 1 to 173 constitute an FAD-binding PCMH-type domain; that stretch reads MLRECDYSQA…TEISMKVLPR (173 aa).

In terms of assembly, the glycolate oxidase likely consists of three subunits, GlcD, GlcE and GlcF. FAD serves as cofactor.

The protein resides in the cell inner membrane. The catalysed reaction is glycolate + A = glyoxylate + AH2. The enzyme catalyses (R)-lactate + A = pyruvate + AH2. With respect to regulation, in vitro the glycolate oxidase activity is inhibited by the sulfhydryl inhibitors CuSO4 and PCMB, by KCN, but not by the metal complexing agent EDTA. Functionally, component of a complex that catalyzes the oxidation of glycolate to glyoxylate. Is required for E.coli to grow on glycolate as a sole source of carbon. Is also able to oxidize D-lactate ((R)-lactate) with a similar rate. Does not link directly to O(2), and 2,6-dichloroindophenol (DCIP) and phenazine methosulfate (PMS) can act as artificial electron acceptors in vitro, but the physiological molecule that functions as a primary electron acceptor during glycolate oxidation is unknown. The chain is Glycolate oxidase subunit GlcE from Escherichia coli (strain K12).